The sequence spans 365 residues: Carboxynorspermidine/carboxyspermidine decarboxylase (365 aa).

At Lys-37 the chain carries N6-(pyridoxal phosphate)lysine. Residues Glu-233 and Asp-269 each contribute to the substrate site.

The protein belongs to the Orn/Lys/Arg decarboxylase class-II family. NspC subfamily. In terms of assembly, homodimer. Pyridoxal 5'-phosphate is required as a cofactor.

Its subcellular location is the cytoplasm. It carries out the reaction carboxynorspermidine + H(+) = norspermidine + CO2. It catalyses the reaction carboxyspermidine + H(+) = spermidine + CO2. In terms of biological role, catalyzes the decarboxylation of carboxynorspermidine and carboxyspermidine. In Herminiimonas arsenicoxydans, this protein is Carboxynorspermidine/carboxyspermidine decarboxylase.